A 103-amino-acid polypeptide reads, in one-letter code: Thioredoxin-1 (103 aa).

The 102-residue stretch at 2–103 folds into the Thioredoxin domain; sequence VKQVSDSSEF…KLEASIKANL (102 aa). Catalysis depends on nucleophile residues Cys-30 and Cys-33. Cys-30 and Cys-33 are oxidised to a cystine.

It belongs to the thioredoxin family.

Participates in various redox reactions through the reversible oxidation of its active center dithiol to a disulfide and catalyzes dithiol-disulfide exchange reactions. The protein is Thioredoxin-1 (trx1) of Schizosaccharomyces pombe (strain 972 / ATCC 24843) (Fission yeast).